The primary structure comprises 220 residues: Adenylate kinase (220 aa).

Residue 10–15 (GAGKGT) coordinates ATP. Positions 30–59 (STGDMLRAAVKAGTPLGVEAKGYMDAGKLV) are NMP. AMP contacts are provided by residues Thr31, Arg36, 57-59 (KLV), 85-88 (GFPR), and Gln92. Positions 122 to 159 (GRRTHPASGRTYHVKFNPPKVEGKDDVTGEPLIQRDDD) are LID. Residues Arg123 and 132-133 (TY) each bind ATP. Residues Arg156 and Arg167 each coordinate AMP. Residue Gly206 coordinates ATP.

It belongs to the adenylate kinase family. In terms of assembly, monomer.

It is found in the cytoplasm. The enzyme catalyses AMP + ATP = 2 ADP. The protein operates within purine metabolism; AMP biosynthesis via salvage pathway; AMP from ADP: step 1/1. Functionally, catalyzes the reversible transfer of the terminal phosphate group between ATP and AMP. Plays an important role in cellular energy homeostasis and in adenine nucleotide metabolism. The polypeptide is Adenylate kinase (Burkholderia multivorans (strain ATCC 17616 / 249)).